The chain runs to 660 residues: Bifunctional polymyxin resistance protein ArnA (660 aa).

The tract at residues 1–304 (MKTVVFAYHD…TLGLVQGSRL (304 aa)) is formyltransferase ArnAFT. 86 to 88 (HLI) serves as a coordination point for (6R)-10-formyltetrahydrofolate. The active-site Proton donor; for formyltransferase activity is His104. (6R)-10-formyltetrahydrofolate contacts are provided by residues Arg114 and 136-140 (VKRAD). Positions 314 to 660 (RRTRVLILGV…RTVDLTDKPS (347 aa)) are dehydrogenase ArnADH. Residues Asp347 and 368 to 369 (DI) contribute to the NAD(+) site. Residues Ala393, Tyr398, and 432–433 (TS) each bind UDP-alpha-D-glucuronate. Glu434 acts as the Proton acceptor; for decarboxylase activity in catalysis. Residues Arg460, Asn492, 526–535 (KLIDGGKQKR), and Tyr613 contribute to the UDP-alpha-D-glucuronate site. The Proton donor; for decarboxylase activity role is filled by Arg619.

It in the N-terminal section; belongs to the Fmt family. UDP-L-Ara4N formyltransferase subfamily. This sequence in the C-terminal section; belongs to the NAD(P)-dependent epimerase/dehydratase family. UDP-glucuronic acid decarboxylase subfamily. Homohexamer, formed by a dimer of trimers.

The catalysed reaction is UDP-alpha-D-glucuronate + NAD(+) = UDP-beta-L-threo-pentopyranos-4-ulose + CO2 + NADH. It catalyses the reaction UDP-4-amino-4-deoxy-beta-L-arabinose + (6R)-10-formyltetrahydrofolate = UDP-4-deoxy-4-formamido-beta-L-arabinose + (6S)-5,6,7,8-tetrahydrofolate + H(+). It functions in the pathway nucleotide-sugar biosynthesis; UDP-4-deoxy-4-formamido-beta-L-arabinose biosynthesis; UDP-4-deoxy-4-formamido-beta-L-arabinose from UDP-alpha-D-glucuronate: step 1/3. The protein operates within nucleotide-sugar biosynthesis; UDP-4-deoxy-4-formamido-beta-L-arabinose biosynthesis; UDP-4-deoxy-4-formamido-beta-L-arabinose from UDP-alpha-D-glucuronate: step 3/3. Its pathway is bacterial outer membrane biogenesis; lipopolysaccharide biosynthesis. Bifunctional enzyme that catalyzes the oxidative decarboxylation of UDP-glucuronic acid (UDP-GlcUA) to UDP-4-keto-arabinose (UDP-Ara4O) and the addition of a formyl group to UDP-4-amino-4-deoxy-L-arabinose (UDP-L-Ara4N) to form UDP-L-4-formamido-arabinose (UDP-L-Ara4FN). The modified arabinose is attached to lipid A and is required for resistance to polymyxin and cationic antimicrobial peptides. The chain is Bifunctional polymyxin resistance protein ArnA from Escherichia coli O127:H6 (strain E2348/69 / EPEC).